The primary structure comprises 571 residues: MSNKKTFKKYSRVAGLLTAALIIGNLVTANAESNKQNTASTETTTTNEQPKPESSELTTEKAGQKTDDMLNSNDMIKLAPKEMPLESAEKEEKKSEDKKKSEEDHTEEINDKIYSLNYNELEVLAKNGETIENFVPKEGVKKADKFIVIERKKKNINTTPVDISIIDSVTDRTYPAALQLANKGFTENKPDAVVTKRNPQKIHIDLPGMGDKATVEVNDPTYANVSTAIDNLVNQWHDNYSGGNTLPARTQYTESMVYSKSQIEAALNVNSKILDGTLGIDFKSISKGEKKVMIAAYKQIFYTVSANLPNNPADVFDKSVTFKELQRKGVSNEAPPLFVSNVAYGRTVFVKLETSSKSNDVEAAFSAALKGTDVKTNGKYSDILENSSFTAVVLGGDAAEHNKVVTKDFDVIRNVIKDNATFSRKNPAYPISYTSVFLKNNKIAGVNNRTEYVETTSTEYTSGKINLSHRGAYVAQYEILWDEINYDDKGKEVITKRRWDNNWYSKTSPFSTVIPLGANSRNIRIMARECTGLAWEWWRKVIDERDVKLSKEINVNISGSTLSPYGSITYK.

The N-terminal stretch at 1 to 33 (MSNKKTFKKYSRVAGLLTAALIIGNLVTANAES) is a signal peptide. Positions 30-108 (NAESNKQNTA…KKSEEDHTEE (79 aa)) are disordered. A compositionally biased stretch (low complexity) spans 37–48 (NTASTETTTTNE). Basic and acidic residues-rich tracts occupy residues 50–68 (PKPE…KTDD) and 79–108 (APKE…HTEE). Transmembrane regions (beta stranded) follow at residues 260 to 273 (KSQI…NSKI), 280 to 289 (IDFKSISKGE), 358 to 367 (SNDVEAAFSA), and 375 to 387 (KTNG…LENS). Positions 529 to 539 (ECTGLAWEWWR) match the Conserved undecapeptide motif. The short motif at 561 to 562 (TL) is the Cholesterol binding element.

Belongs to the cholesterol-dependent cytolysin family. As to quaternary structure, homooligomeric pore complex of 35 to 50 subunits; when inserted in the host membrane.

It is found in the secreted. It localises to the host cell membrane. Its function is as follows. A cholesterol-dependent toxin that causes cytolysis by forming pores in cholesterol containing host membranes. After binding to target membranes, the protein undergoes a major conformation change, leading to its insertion in the host membrane and formation of an oligomeric pore complex. Cholesterol is required for binding to host membranes, membrane insertion and pore formation; cholesterol binding is mediated by a Thr-Leu pair in the C-terminus. Can be reversibly inactivated by oxidation. The protein is Streptolysin O (slo) of Streptococcus pyogenes serotype M18 (strain MGAS8232).